Consider the following 295-residue polypeptide: Bifunctional protein FolD (295 aa).

Residues 163-165 (GRS), Ser-188, and Ile-229 contribute to the NADP(+) site.

It belongs to the tetrahydrofolate dehydrogenase/cyclohydrolase family. In terms of assembly, homodimer.

It catalyses the reaction (6R)-5,10-methylene-5,6,7,8-tetrahydrofolate + NADP(+) = (6R)-5,10-methenyltetrahydrofolate + NADPH. It carries out the reaction (6R)-5,10-methenyltetrahydrofolate + H2O = (6R)-10-formyltetrahydrofolate + H(+). Its pathway is one-carbon metabolism; tetrahydrofolate interconversion. In terms of biological role, catalyzes the oxidation of 5,10-methylenetetrahydrofolate to 5,10-methenyltetrahydrofolate and then the hydrolysis of 5,10-methenyltetrahydrofolate to 10-formyltetrahydrofolate. The chain is Bifunctional protein FolD from Hyphomonas neptunium (strain ATCC 15444).